Reading from the N-terminus, the 261-residue chain is Triosephosphate isomerase (261 aa).

10 to 12 (NWK) serves as a coordination point for substrate. Residue His-100 is the Electrophile of the active site. Glu-172 functions as the Proton acceptor in the catalytic mechanism. Substrate is bound by residues Gly-178, Ser-218, and 239–240 (GG).

The protein belongs to the triosephosphate isomerase family. Homodimer.

The protein resides in the cytoplasm. It carries out the reaction D-glyceraldehyde 3-phosphate = dihydroxyacetone phosphate. It participates in carbohydrate biosynthesis; gluconeogenesis. The protein operates within carbohydrate degradation; glycolysis; D-glyceraldehyde 3-phosphate from glycerone phosphate: step 1/1. Functionally, involved in the gluconeogenesis. Catalyzes stereospecifically the conversion of dihydroxyacetone phosphate (DHAP) to D-glyceraldehyde-3-phosphate (G3P). This is Triosephosphate isomerase from Mycolicibacterium paratuberculosis (strain ATCC BAA-968 / K-10) (Mycobacterium paratuberculosis).